A 951-amino-acid polypeptide reads, in one-letter code: Plasma membrane ATPase (951 aa).

A run of 4 helical transmembrane segments spans residues 61–81 (FLGF…IMAI), 93–113 (WEDF…SFIE), 243–263 (IGNF…IVMF), and 277–297 (LLVL…SVTM). Residue D329 is the 4-aspartylphosphate intermediate of the active site. Residues D588 and D592 each contribute to the Mg(2+) site. The next 6 membrane-spanning stretches (helical) occupy residues 647-667 (IYAV…ALIW), 671-691 (FSPF…MTIS), 709-729 (IFAT…IFFW), 752-772 (EMMS…IFVT), 785-805 (LLLV…AVYA), and 814-834 (GIGW…YFPL).

It belongs to the cation transport ATPase (P-type) (TC 3.A.3) family. Type IIIA subfamily.

It is found in the cell membrane. It carries out the reaction ATP + H2O + H(+)(in) = ADP + phosphate + 2 H(+)(out). In terms of biological role, the plasma membrane ATPase of plants and fungi is a hydrogen ion pump. The proton gradient it generates drives the active transport of nutrients by H(+)-symport. The resulting external acidification and/or internal alkinization may mediate growth responses. The sequence is that of Plasma membrane ATPase from Oryza sativa subsp. japonica (Rice).